A 1045-amino-acid polypeptide reads, in one-letter code: MILNKKLKLAYCVFLGCYGLSLHSSLAAYREPGQLGSPDSWKNAEFNRQWGLEAISAEFAYARAYTGKGVTIGVIDDAILSHPEFAGKLTRLDNGSYNFSYDKQDNMSFGTHGTHVAGIAAAKRDGSGMHGVAYDADIIGTKLNDYGNRNGREELIQSAARVINNSWGIRPDIRRDAKGDIIWLPNGRPDYVAWVKTDVINEVMRNKSNLEWGSEQPVPTGGHSAMATLLRAAKHGKLIVFSAGNYNNYNIPEAQKSLPYAFPEVLNNYLIVTNLSNNDKLSVSSTSCGHTASFLACQPGSSIYSSVGELVSNTGGAVNREAYNKGELTVKPDYGNMSGTSMAPDVTGFAAVLMQRFPYMSAAQISAVIKTTATDLGEVGIDHLFGWGRVNLRDAINGPKMFITQEDIPQEFYVPGSYSEKQFVVNIPGLGNIVEAGTPVERRCTSGECDFDSWSNDIRGHGGLTKTGAGTLAVLGNNTYSGDTWVKQGVLAYNGSVASNVYIENSGTVAGDRTVGAFRAVRGCEHGDAGNGYGTLHVLLDAVFDRGSQYNVELADKGRSDKLAARRAFLNGGSMNVSLDRSQKLMSQNEAELLVGNNYTILTTLDGVTGRFDNANPSYPFVKVALDYRGNDTGLGITKTDATFDSLASTENDKEVARAVETLNATEPVTETAKRSVSIPASEEANLQQSDAGAAQAVNEEASIVAGHPIYESFLGFTTARELQQATRQLSGQIHADMASAQINESRYLRDTATERLRQADGRRTASDIKADDNGAWAKLLGNWGHASGNDNATGYQTSTYGVLLGLDSELFDDGRLGVMTGYTRTSLVGGLQSVVHSDTTHLGLYGDKRFGALALPAGGTYTWHRIDTSRSVNYGAQADREKARYNARTGQLFIESGYDWSNDVVNLEPFANLAYTHYRNEGINEQGGAAALRGDKQSQSATASTLGLRADTQWQTDSVAIALPGELGWQHQYGKLERKTQLMFKRSDVAFDVNSVPVSRDGAILKAGVDVSINKNVVLSLGYGGQLSSNHQDNSVNAGLTWRF.

Positions methionine 1 to alanine 27 are cleaved as a signal peptide. In terms of domain architecture, Peptidase S8 spans glutamine 49–isoleucine 396. Active-site charge relay system residues include aspartate 76, histidine 112, and serine 341. The propeptide occupies serine 646–phenylalanine 1045. The Autotransporter domain maps to isoleucine 769 to phenylalanine 1045.

It belongs to the peptidase S8 family.

It localises to the secreted. The polypeptide is Extracellular serine protease (Serratia marcescens).